The sequence spans 355 residues: MFKEKLQPFIDRYNEISELLSSPDIASDINRMTELSKEQSGLAPLVEKANLYIETADAIAENKELLSDEELGDLAKEELSELEPMLPKLEEEIKILMIPKDKNDDKNIFLELRAGAGGDESALFVADVFRMYSRYAEQMGWKVEIVSTNDGTAGGYKELIAEIKGQGVYSQLKYEAGTHRVQRVPDTETQGRVHTSAITVAVIPEVDDVEVDIKPNEVKMDVYRSSGCGGQSVNTTDSAVRLTHIPTGIVVAIQDEKSQHKNRDKAMKVLKARVYESELQKQLDETAGQRKLQVGSGDRSEKIRTYNYPQNRLTDHRIGLTLYALDDVMNNGNLKLVIDPLIAHAQTEAIQEAGL.

Gln231 carries the N5-methylglutamine modification.

It belongs to the prokaryotic/mitochondrial release factor family. Post-translationally, methylated by PrmC. Methylation increases the termination efficiency of RF1.

The protein resides in the cytoplasm. Functionally, peptide chain release factor 1 directs the termination of translation in response to the peptide chain termination codons UAG and UAA. The sequence is that of Peptide chain release factor 1 from Sulfurovum sp. (strain NBC37-1).